The sequence spans 69 residues: Putative membrane protein insertion efficiency factor (69 aa).

This sequence belongs to the UPF0161 family.

The protein localises to the cell membrane. Functionally, could be involved in insertion of integral membrane proteins into the membrane. In Clostridium botulinum (strain Okra / Type B1), this protein is Putative membrane protein insertion efficiency factor.